We begin with the raw amino-acid sequence, 46 residues long: Diuretic hormone (46 aa).

Ile-46 carries the isoleucine amide modification.

It belongs to the sauvagine/corticotropin-releasing factor/urotensin I family.

It is found in the secreted. In terms of biological role, regulation of fluid secretion. Stimulates primary urine secretion by Malpighian tubules and causes a dose-dependent stimulation of cAMP levels in the tubules. This chain is Diuretic hormone, found in Locusta migratoria (Migratory locust).